Reading from the N-terminus, the 625-residue chain is Protein LEO1 homolog (625 aa).

Disordered stretches follow at residues 1 to 214 and 415 to 625; these read MVKG…DMVL and EREK…SDED. 2 stretches are compositionally biased toward acidic residues: residues 40-55 and 63-80; these read DEAE…GEAE and EAES…PGES. 3 stretches are compositionally biased toward basic and acidic residues: residues 97-113, 121-137, and 182-197; these read SEAR…EHGG, QEVV…KHYE, and EYVR…RSPI. At Ser203 the chain carries Phosphoserine. Basic and acidic residues predominate over residues 415–425; the sequence is EREKEKREKAE. Residues 415-539 adopt a coiled-coil conformation; that stretch reads EREKEKREKA…ETEEEEEEKS (125 aa). Over residues 426–436 the composition is skewed to polar residues; it reads SQNLKASTKLS. The segment covering 471-491 has biased composition (basic and acidic residues); that stretch reads YRSNRGYEEDLEAEAQRERRI. A compositionally biased stretch (basic residues) spans 492–501; it reads LNAKKSHKGI. Acidic residues predominate over residues 523–537; that stretch reads EREESEYETEEEEEE. Over residues 538-547 the composition is skewed to basic and acidic residues; the sequence is KSPARGRGKD. Ser548, Ser570, Ser600, Ser605, and Ser622 each carry phosphoserine. The segment covering 548–561 has biased composition (acidic residues); it reads SEDEYEEDAEEDEE.

This sequence belongs to the LEO1 family. In terms of assembly, component of the nuclear PAF1 complex (PAF1C), which consists of VIP2/ELF7/PAF1, VIP3/SKI8/WDR61, VIP4/LEO1, VIP5/RTF1, VIP6/ELF8/CTR9 and CDC73. Interacts with VIP3 and VIP6. As to expression, expressed in roots, shoot apices, stems, cauline leaves, inflorescence apices and flowers.

The protein resides in the nucleus. Component of the PAF1 complex (PAF1C) which is involved in histone modifications such as methylation on histone H3 'Lys-4' (H3K4me3). Involved in regulation of flowering time. Required for the expression of the flowering repressor and MADS box gene FLC. Involved in the control of seed dormancy and germination. This Arabidopsis thaliana (Mouse-ear cress) protein is Protein LEO1 homolog.